Here is a 1342-residue protein sequence, read N- to C-terminus: DNA-directed RNA polymerase subunit beta (1342 aa).

The protein belongs to the RNA polymerase beta chain family. In terms of assembly, the RNAP catalytic core consists of 2 alpha, 1 beta, 1 beta' and 1 omega subunit. When a sigma factor is associated with the core the holoenzyme is formed, which can initiate transcription.

It carries out the reaction RNA(n) + a ribonucleoside 5'-triphosphate = RNA(n+1) + diphosphate. Functionally, DNA-dependent RNA polymerase catalyzes the transcription of DNA into RNA using the four ribonucleoside triphosphates as substrates. The polypeptide is DNA-directed RNA polymerase subunit beta (Sodalis glossinidius (strain morsitans)).